The following is a 154-amino-acid chain: 6,7-dimethyl-8-ribityllumazine synthase (154 aa).

Residues Trp-22, 56–58 (AWE), and 80–82 (CVV) each bind 5-amino-6-(D-ribitylamino)uracil. A (2S)-2-hydroxy-3-oxobutyl phosphate-binding site is contributed by 85 to 86 (DT). His-88 acts as the Proton donor in catalysis. Asn-113 is a binding site for 5-amino-6-(D-ribitylamino)uracil. Arg-127 contributes to the (2S)-2-hydroxy-3-oxobutyl phosphate binding site.

It belongs to the DMRL synthase family. Forms an icosahedral capsid composed of 60 subunits, arranged as a dodecamer of pentamers.

It catalyses the reaction (2S)-2-hydroxy-3-oxobutyl phosphate + 5-amino-6-(D-ribitylamino)uracil = 6,7-dimethyl-8-(1-D-ribityl)lumazine + phosphate + 2 H2O + H(+). Its pathway is cofactor biosynthesis; riboflavin biosynthesis; riboflavin from 2-hydroxy-3-oxobutyl phosphate and 5-amino-6-(D-ribitylamino)uracil: step 1/2. Its function is as follows. Catalyzes the formation of 6,7-dimethyl-8-ribityllumazine by condensation of 5-amino-6-(D-ribitylamino)uracil with 3,4-dihydroxy-2-butanone 4-phosphate. This is the penultimate step in the biosynthesis of riboflavin. The chain is 6,7-dimethyl-8-ribityllumazine synthase from Xylella fastidiosa (strain M23).